The chain runs to 197 residues: dITP/XTP pyrophosphatase (197 aa).

10-15 (TKNQGK) contributes to the substrate binding site. Asp70 (proton acceptor) is an active-site residue. Residue Asp70 coordinates Mg(2+). Residues Ser71, 151 to 154 (FGYD), Lys173, and 178 to 179 (HR) each bind substrate.

Belongs to the HAM1 NTPase family. In terms of assembly, homodimer. Mg(2+) is required as a cofactor.

The catalysed reaction is XTP + H2O = XMP + diphosphate + H(+). It carries out the reaction dITP + H2O = dIMP + diphosphate + H(+). The enzyme catalyses ITP + H2O = IMP + diphosphate + H(+). Pyrophosphatase that catalyzes the hydrolysis of nucleoside triphosphates to their monophosphate derivatives, with a high preference for the non-canonical purine nucleotides XTP (xanthosine triphosphate), dITP (deoxyinosine triphosphate) and ITP. Seems to function as a house-cleaning enzyme that removes non-canonical purine nucleotides from the nucleotide pool, thus preventing their incorporation into DNA/RNA and avoiding chromosomal lesions. The protein is dITP/XTP pyrophosphatase of Symbiobacterium thermophilum (strain DSM 24528 / JCM 14929 / IAM 14863 / T).